The primary structure comprises 141 residues: Large ribosomal subunit protein uL11 (141 aa).

This sequence belongs to the universal ribosomal protein uL11 family. As to quaternary structure, part of the ribosomal stalk of the 50S ribosomal subunit. Interacts with L10 and the large rRNA to form the base of the stalk. L10 forms an elongated spine to which L12 dimers bind in a sequential fashion forming a multimeric L10(L12)X complex. Post-translationally, one or more lysine residues are methylated.

In terms of biological role, forms part of the ribosomal stalk which helps the ribosome interact with GTP-bound translation factors. The protein is Large ribosomal subunit protein uL11 of Roseobacter denitrificans (strain ATCC 33942 / OCh 114) (Erythrobacter sp. (strain OCh 114)).